The following is a 66-amino-acid chain: Large ribosomal subunit protein uL29 (66 aa).

It belongs to the universal ribosomal protein uL29 family.

The polypeptide is Large ribosomal subunit protein uL29 (Ruegeria sp. (strain TM1040) (Silicibacter sp.)).